The sequence spans 226 residues: Cytidylate kinase (226 aa).

Residue 10 to 18 (GPASSGKST) participates in ATP binding.

It belongs to the cytidylate kinase family. Type 1 subfamily.

The protein localises to the cytoplasm. It catalyses the reaction CMP + ATP = CDP + ADP. The catalysed reaction is dCMP + ATP = dCDP + ADP. This is Cytidylate kinase from Streptococcus thermophilus (strain CNRZ 1066).